The primary structure comprises 165 residues: V-type proton ATPase 16 kDa proteolipid subunit (165 aa).

The Lumenal portion of the chain corresponds to 1–10 (MSSVFSGDET). A helical membrane pass occupies residues 11-33 (APFFGFLGAASALIFSCMGAAYG). The Cytoplasmic segment spans residues 34 to 55 (TAKSGVGVASMGVMRPELVMKS). Residues 56 to 76 (IVPVVMAGVLGIYGLIIAVII) form a helical membrane-spanning segment. Topologically, residues 77-95 (STGINPKAKPYYLFDGYAH) are lumenal. A helical transmembrane segment spans residues 96–117 (LSSGLACGLAGLAAGMAIGIVG). The Cytoplasmic segment spans residues 118 to 129 (DAGVRANAQQPK). The chain crosses the membrane as a helical span at residues 130–155 (LFVGMILILIFAEALALYGLIVGIIL). The Lumenal portion of the chain corresponds to 156–165 (SSRAGQSRAD).

Belongs to the V-ATPase proteolipid subunit family. As to quaternary structure, V-ATPase is a heteromultimeric enzyme composed of a peripheral catalytic V1 complex (main components: subunits A, B, C, D, E, and F) attached to an integral membrane V0 proton pore complex (main component: the proteolipid protein; which is present as a hexamer that forms the proton-conducting pore).

It localises to the vacuole membrane. Proton-conducting pore forming subunit of the membrane integral V0 complex of vacuolar ATPase. V-ATPase is responsible for acidifying a variety of intracellular compartments in eukaryotic cells. This is V-type proton ATPase 16 kDa proteolipid subunit (VATP-P1) from Oryza sativa subsp. indica (Rice).